Here is a 250-residue protein sequence, read N- to C-terminus: MILTSISVLKDNYVWILYNDNCSCIIIDPGVSEDIIKKIEKKNWKLIAILLTHNHIDHVGGVEEIIRRYPNVTVFGPEETKTRNVNKIVKQGDVIKLLKSEIHVFLTPGHTLGHVSYYLKPYIFCGDTLFSGGCGRVFKNKFFDMYQSINFIKSLPKKTILCCSHEYTLSNLNFAMSILPFDKKIKKYYKKIKKHISQNKTSLPVSLETEKKINIFLRTNEKTIKKAMGLKKDTSSFEVFILLRKEKDDF.

Positions 53, 55, 57, 58, 110, 127, and 165 each coordinate Zn(2+).

This sequence belongs to the metallo-beta-lactamase superfamily. Glyoxalase II family. In terms of assembly, monomer. The cofactor is Zn(2+).

The enzyme catalyses an S-(2-hydroxyacyl)glutathione + H2O = a 2-hydroxy carboxylate + glutathione + H(+). Its pathway is secondary metabolite metabolism; methylglyoxal degradation; (R)-lactate from methylglyoxal: step 2/2. In terms of biological role, thiolesterase that catalyzes the hydrolysis of S-D-lactoyl-glutathione to form glutathione and D-lactic acid. This chain is Hydroxyacylglutathione hydrolase, found in Buchnera aphidicola subsp. Schizaphis graminum (strain Sg).